Consider the following 675-residue polypeptide: UvrABC system protein B (675 aa).

Residues 32–417 (EGLSDGLAYQ…EHAGQVVEQV (386 aa)) form the Helicase ATP-binding domain. An ATP-binding site is contributed by 45 to 52 (GVTGSGKT). The short motif at 98–121 (YYDYYQPEAYVPSRDLFIEKDSAI) is the Beta-hairpin element. In terms of domain architecture, Helicase C-terminal spans 436 to 602 (QVDDLMSEIN…QIKKQVKDII (167 aa)). Residues 634–669 (IKEIAKLEKAMQQAARDLQFEEAAVLRDRISNIKEN) form the UVR domain.

It belongs to the UvrB family. As to quaternary structure, forms a heterotetramer with UvrA during the search for lesions. Interacts with UvrC in an incision complex.

Its subcellular location is the cytoplasm. In terms of biological role, the UvrABC repair system catalyzes the recognition and processing of DNA lesions. A damage recognition complex composed of 2 UvrA and 2 UvrB subunits scans DNA for abnormalities. Upon binding of the UvrA(2)B(2) complex to a putative damaged site, the DNA wraps around one UvrB monomer. DNA wrap is dependent on ATP binding by UvrB and probably causes local melting of the DNA helix, facilitating insertion of UvrB beta-hairpin between the DNA strands. Then UvrB probes one DNA strand for the presence of a lesion. If a lesion is found the UvrA subunits dissociate and the UvrB-DNA preincision complex is formed. This complex is subsequently bound by UvrC and the second UvrB is released. If no lesion is found, the DNA wraps around the other UvrB subunit that will check the other stand for damage. In Neisseria gonorrhoeae (strain ATCC 700825 / FA 1090), this protein is UvrABC system protein B.